The primary structure comprises 497 residues: GDP-fucose protein O-fucosyltransferase 4 (497 aa).

Residues 1–6 (MACRRR) lie on the Cytoplasmic side of the membrane. The chain crosses the membrane as a helical; Signal-anchor for type II membrane protein span at residues 7–27 (LLPCAGLGLFGVLCWVWVSFA). The Lumenal segment spans residues 28-497 (SFPDDQLPLE…ITERRARGKH (470 aa)). Asn-169 is a glycosylation site (N-linked (GlcNAc...) asparagine). Cys-392 and Cys-395 are oxidised to a cystine. The interval 406–427 (RAHRKDPERNPPPLPKMASNSH) is disordered. An N-linked (GlcNAc...) asparagine glycan is attached at Asn-474.

This sequence belongs to the glycosyltransferase 10 family.

It is found in the endoplasmic reticulum membrane. It carries out the reaction L-threonyl-[protein] + GDP-beta-L-fucose = 3-O-(alpha-L-fucosyl)-L-threonyl-[protein] + GDP + H(+). The catalysed reaction is L-seryl-[protein] + GDP-beta-L-fucose = 3-O-(alpha-L-fucosyl)-L-seryl-[protein] + GDP + H(+). Its pathway is protein modification; protein glycosylation. Its function is as follows. Protein O-fucosyltransferase that specifically catalyzes O-fucosylation of serine or threonine residues in EMI domains of target proteins. Attaches fucose through an O-glycosidic linkage. O-fucosylation of EMI domain-containing proteins may be required for facilitating protein folding and secretion. This chain is GDP-fucose protein O-fucosyltransferase 4 (fut11), found in Oryzias latipes (Japanese rice fish).